Here is a 116-residue protein sequence, read N- to C-terminus: T cell receptor alpha variable 38-1 (116 aa).

Positions 1 to 21 (MTRVSLLWAVVVSTCLESGMA) are cleaved as a signal peptide. The Ig-like domain maps to 22–116 (QTVTQSQPEM…TAMYFCAFMK (95 aa)). Cysteines 43 and 112 form a disulfide. Asparagine 78 is a glycosylation site (N-linked (GlcNAc...) asparagine).

In terms of assembly, alpha-beta TR is a heterodimer composed of an alpha and beta chain; disulfide-linked. The alpha-beta TR is associated with the transmembrane signaling CD3 coreceptor proteins to form the TR-CD3 (TcR or TCR). The assembly of alpha-beta TR heterodimers with CD3 occurs in the endoplasmic reticulum where a single alpha-beta TR heterodimer associates with one CD3D-CD3E heterodimer, one CD3G-CD3E heterodimer and one CD247 homodimer forming a stable octameric structure. CD3D-CD3E and CD3G-CD3E heterodimers preferentially associate with TR alpha and TR beta chains, respectively. The association of the CD247 homodimer is the last step of TcR assembly in the endoplasmic reticulum and is required for transport to the cell surface.

The protein resides in the cell membrane. Its function is as follows. V region of the variable domain of T cell receptor (TR) alpha chain that participates in the antigen recognition. Alpha-beta T cell receptors are antigen specific receptors which are essential to the immune response and are present on the cell surface of T lymphocytes. Recognize peptide-major histocompatibility (MH) (pMH) complexes that are displayed by antigen presenting cells (APC), a prerequisite for efficient T cell adaptive immunity against pathogens. Binding of alpha-beta TR to pMH complex initiates TR-CD3 clustering on the cell surface and intracellular activation of LCK that phosphorylates the ITAM motifs of CD3G, CD3D, CD3E and CD247 enabling the recruitment of ZAP70. In turn ZAP70 phosphorylates LAT, which recruits numerous signaling molecules to form the LAT signalosome. The LAT signalosome propagates signal branching to three major signaling pathways, the calcium, the mitogen-activated protein kinase (MAPK) kinase and the nuclear factor NF-kappa-B (NF-kB) pathways, leading to the mobilization of transcription factors that are critical for gene expression and essential for T cell growth and differentiation. The T cell repertoire is generated in the thymus, by V-(D)-J rearrangement. This repertoire is then shaped by intrathymic selection events to generate a peripheral T cell pool of self-MH restricted, non-autoaggressive T cells. Post-thymic interaction of alpha-beta TR with the pMH complexes shapes TR structural and functional avidity. This is T cell receptor alpha variable 38-1 from Homo sapiens (Human).